The sequence spans 1038 residues: E3 ubiquitin-protein ligase Topors (1038 aa).

A disordered region spans residues 53-96 (ESGSESGDNEAEEPVSAGPDNANAIGEPGTSASAAEENGTVERN). Residues 102-141 (CAICLSRCRRKCFTDSCMHQFCFKCLCEWSKIKPECPLCK) form an RING-type zinc finger. The interaction with hairy/hry stretch occupies residues 495–682 (AAANAEVAAI…SSDSSTTNSE (188 aa)). Disordered regions lie at residues 627–858 (DQLR…SSTA) and 972–1038 (GESE…LLPY). Over residues 633-642 (RSIRSKKSRR) the composition is skewed to basic residues. Positions 643-668 (SSMPARSDSGSSPSSCSSSSFHFSSS) are enriched in low complexity. Residues 686–699 (KKSRKRVANNKRSK) show a composition bias toward basic residues. A compositionally biased stretch (low complexity) spans 723–744 (QQQISQKKPQRQPESSSDSPSS). Over residues 792-801 (ATLEDRKPVK) the composition is skewed to basic and acidic residues. T820 carries the phosphothreonine modification. At S822 the chain carries Phosphoserine. Positions 841–858 (SHSNQSSQSASLASSSTA) are enriched in low complexity. Acidic residues predominate over residues 987-1031 (EEQDEEDEEDEDQEEDDQEEEKAAEEEEEEEEDDDDSDNHDENDE).

In terms of assembly, interacts with hairy/hry, p53 and Top1. Interacts with the gypsy chromatin insulator complex, composed of Cp190, mod(mdg4) and su(Hw); interacts directly with mod(mdg4) and su(Hw). Interacts with Lam/lamin.

It localises to the nucleus. Its subcellular location is the chromosome. It carries out the reaction S-ubiquitinyl-[E2 ubiquitin-conjugating enzyme]-L-cysteine + [acceptor protein]-L-lysine = [E2 ubiquitin-conjugating enzyme]-L-cysteine + N(6)-ubiquitinyl-[acceptor protein]-L-lysine.. Functionally, functions as a ubiquitin-protein E3 ligase. Negatively regulates the transcriptional repressor hairy/hry by promoting its ubiquitination and subsequent degradation. Also directs the nuclear organization of the gypsy chromatin insulator. Chromatin insulators are regulatory elements which establish independent domains of transcriptional activity within eukaryotic genomes. Insulators have two defining properties; they can block the communication between an enhancer and a promoter when placed between them, and can also buffer transgenes from position effect variegation (PEV). Insulators are proposed to structure the chromatin fiber into independent domains of differing transcriptional potential by promoting the formation of distinct chromatin loops. This chromatin looping may require the formation of insulator bodies, where homotypic interactions between individual subunits of the insulator complex could promote the clustering of widely spaced insulators at the nuclear periphery. Within the gypsy insulator complex, this protein may promote formation of nuclear insulator bodies by recruiting individual insulator complexes to the nuclear lamina. The sequence is that of E3 ubiquitin-protein ligase Topors (Topors) from Drosophila melanogaster (Fruit fly).